The following is a 178-amino-acid chain: MIMSKEKLIKSIREIPDFPIPGILFYDVTTLFKDSERLQELSDIMYEMYKDKGITKVVGIESRGFIMGPILATRLGAGFIPIRKPGKLPAETMEESYDKEYGKDTVQIHKDALNENDVVLLHDDLLATGGTMKAACNLVKKLYPKKVYVNFIIELKELNGKQVFENDQDVDIQSVLSL.

Belongs to the purine/pyrimidine phosphoribosyltransferase family. Homodimer.

It localises to the cytoplasm. It catalyses the reaction AMP + diphosphate = 5-phospho-alpha-D-ribose 1-diphosphate + adenine. The protein operates within purine metabolism; AMP biosynthesis via salvage pathway; AMP from adenine: step 1/1. Catalyzes a salvage reaction resulting in the formation of AMP, that is energically less costly than de novo synthesis. This Bacteroides fragilis (strain YCH46) protein is Adenine phosphoribosyltransferase.